Consider the following 176-residue polypeptide: MSQVAPKWYQSEDVPAPKQTRKTARPQKLRASLVPGTVLILLAGRFRGKRVVYLKNLEDNTLLVSGPFKVNGVPLRRVNARYVIATSTKVNVSGVDVSKFNVEYFAREKSSKSKKSEAEFFNESQPKKEIKAERVADQKSVDAALLSEIKKTPLLKQYLAASFSLKNGDRPHLLKF.

The interval 1–27 is disordered; it reads MSQVAPKWYQSEDVPAPKQTRKTARPQ.

Belongs to the eukaryotic ribosomal protein eL6 family. In terms of assembly, component of the large ribosomal subunit. Mature ribosomes consist of a small (40S) and a large (60S) subunit. The 40S subunit contains about 32 different proteins and 1 molecule of RNA (18S). The 60S subunit contains 45 different proteins and 3 molecules of RNA (25S, 5.8S and 5S).

The protein resides in the cytoplasm. Functionally, component of the ribosome, a large ribonucleoprotein complex responsible for the synthesis of proteins in the cell. The small ribosomal subunit (SSU) binds messenger RNAs (mRNAs) and translates the encoded message by selecting cognate aminoacyl-transfer RNA (tRNA) molecules. The large subunit (LSU) contains the ribosomal catalytic site termed the peptidyl transferase center (PTC), which catalyzes the formation of peptide bonds, thereby polymerizing the amino acids delivered by tRNAs into a polypeptide chain. The nascent polypeptides leave the ribosome through a tunnel in the LSU and interact with protein factors that function in enzymatic processing, targeting, and the membrane insertion of nascent chains at the exit of the ribosomal tunnel. The sequence is that of Large ribosomal subunit protein eL6 from Candida albicans (strain SC5314 / ATCC MYA-2876) (Yeast).